Reading from the N-terminus, the 121-residue chain is Protein yippee (121 aa).

In terms of domain architecture, Yippee spans 13 to 110 (KLFNCAQCHT…LEYALITEAE (98 aa)). Positions 17, 20, 73, and 76 each coordinate Zn(2+).

This sequence belongs to the yippee family. Interacts with hemolin.

This Drosophila melanogaster (Fruit fly) protein is Protein yippee.